A 210-amino-acid polypeptide reads, in one-letter code: DNA-directed RNA polymerase subunit 5-like protein 1 (210 aa).

It belongs to the archaeal Rpo5/eukaryotic RPB5 RNA polymerase subunit family.

The protein resides in the nucleus. The chain is DNA-directed RNA polymerase subunit 5-like protein 1 (NRPB5L1) from Arabidopsis thaliana (Mouse-ear cress).